We begin with the raw amino-acid sequence, 426 residues long: Serine--tRNA ligase (426 aa).

Residue 229–231 participates in L-serine binding; the sequence is TAE. ATP is bound at residue 260 to 262; it reads RSE. Glu-283 is a binding site for L-serine. 347-350 contacts ATP; it reads EIAS. Ser-383 lines the L-serine pocket.

It belongs to the class-II aminoacyl-tRNA synthetase family. Type-1 seryl-tRNA synthetase subfamily. In terms of assembly, homodimer. The tRNA molecule binds across the dimer.

The protein resides in the cytoplasm. The catalysed reaction is tRNA(Ser) + L-serine + ATP = L-seryl-tRNA(Ser) + AMP + diphosphate + H(+). The enzyme catalyses tRNA(Sec) + L-serine + ATP = L-seryl-tRNA(Sec) + AMP + diphosphate + H(+). Its pathway is aminoacyl-tRNA biosynthesis; selenocysteinyl-tRNA(Sec) biosynthesis; L-seryl-tRNA(Sec) from L-serine and tRNA(Sec): step 1/1. Catalyzes the attachment of serine to tRNA(Ser). Is also able to aminoacylate tRNA(Sec) with serine, to form the misacylated tRNA L-seryl-tRNA(Sec), which will be further converted into selenocysteinyl-tRNA(Sec). This is Serine--tRNA ligase from Rickettsia bellii (strain RML369-C).